The following is a 336-amino-acid chain: Holliday junction branch migration complex subunit RuvB (336 aa).

The interval 4–184 is large ATPase domain (RuvB-L); that stretch reads ADRLISATGV…FGIVQRLEFY (181 aa). Residues Ile-23, Arg-24, Gly-65, Lys-68, Thr-69, Thr-70, 131-133, Arg-174, Tyr-184, and Arg-221 each bind ATP; that span reads EDY. Residue Thr-69 participates in Mg(2+) binding. The tract at residues 185–255 is small ATPAse domain (RuvB-S); sequence NVKDLTDIVS…IAARAMDMLD (71 aa). A head domain (RuvB-H) region spans residues 258-336; it reads NEGFDFMDRK…HFGLQRPDER (79 aa). Residues Arg-313 and Arg-318 each coordinate DNA.

This sequence belongs to the RuvB family. In terms of assembly, homohexamer. Forms an RuvA(8)-RuvB(12)-Holliday junction (HJ) complex. HJ DNA is sandwiched between 2 RuvA tetramers; dsDNA enters through RuvA and exits via RuvB. An RuvB hexamer assembles on each DNA strand where it exits the tetramer. Each RuvB hexamer is contacted by two RuvA subunits (via domain III) on 2 adjacent RuvB subunits; this complex drives branch migration. In the full resolvosome a probable DNA-RuvA(4)-RuvB(12)-RuvC(2) complex forms which resolves the HJ.

The protein localises to the cytoplasm. The catalysed reaction is ATP + H2O = ADP + phosphate + H(+). In terms of biological role, the RuvA-RuvB-RuvC complex processes Holliday junction (HJ) DNA during genetic recombination and DNA repair, while the RuvA-RuvB complex plays an important role in the rescue of blocked DNA replication forks via replication fork reversal (RFR). RuvA specifically binds to HJ cruciform DNA, conferring on it an open structure. The RuvB hexamer acts as an ATP-dependent pump, pulling dsDNA into and through the RuvAB complex. RuvB forms 2 homohexamers on either side of HJ DNA bound by 1 or 2 RuvA tetramers; 4 subunits per hexamer contact DNA at a time. Coordinated motions by a converter formed by DNA-disengaged RuvB subunits stimulates ATP hydrolysis and nucleotide exchange. Immobilization of the converter enables RuvB to convert the ATP-contained energy into a lever motion, pulling 2 nucleotides of DNA out of the RuvA tetramer per ATP hydrolyzed, thus driving DNA branch migration. The RuvB motors rotate together with the DNA substrate, which together with the progressing nucleotide cycle form the mechanistic basis for DNA recombination by continuous HJ branch migration. Branch migration allows RuvC to scan DNA until it finds its consensus sequence, where it cleaves and resolves cruciform DNA. In Aeromonas salmonicida (strain A449), this protein is Holliday junction branch migration complex subunit RuvB.